The chain runs to 332 residues: Melanocortin receptor 4 (332 aa).

Residues 1-43 (MNSTHHHGMYTSLHLWNRSSHGLHGNASESLGKGHSDGGCYEQ) lie on the Extracellular side of the membrane. 3 N-linked (GlcNAc...) asparagine glycosylation sites follow: Asn2, Asn17, and Asn26. 2 disulfide bridges follow: Cys40-Cys279 and Cys271-Cys277. A helical transmembrane segment spans residues 44 to 69 (LFVSPEVFVTLGVISLLENILVIVAI). Residues 70 to 81 (AKNKNLHSPMYF) lie on the Cytoplasmic side of the membrane. A helical membrane pass occupies residues 82 to 106 (FICSLAVADMLVSVSNGSETIVITL). Residues Glu100, Asp122, and Asp126 each coordinate Ca(2+). The Extracellular portion of the chain corresponds to 107–123 (LNSTDTDAQSFTVNIDN). A helical membrane pass occupies residues 124–145 (VIDSVICSSLLASICSLLSIAV). Topologically, residues 146 to 165 (DRYFTIFYALQYHNIMTVRR) are cytoplasmic. A helical transmembrane segment spans residues 166–186 (VGIIISCIWAACTVSGVLFII). Over 187–191 (YSDSS) the chain is Extracellular. A helical transmembrane segment spans residues 192 to 215 (AVIICLITMFFTMLVLMASLYVHM). Residues 216 to 248 (FLMARLHIKRIAVLPGTGTIRQGANMKGAITLT) lie on the Cytoplasmic side of the membrane. Residues 249–271 (ILIGVFVVCWAPFFLHLLFYISC) form a helical membrane-spanning segment. At 272-280 (PQNPYCVCF) the chain is on the extracellular side. A helical membrane pass occupies residues 281-304 (MSHFNLYLILIMCNAVIDPLIYAL). Residues 305 to 332 (RSQELRKTFKEIICFYPLGGICELPGRY) lie on the Cytoplasmic side of the membrane. Cys318 carries S-palmitoyl cysteine lipidation.

The protein belongs to the G-protein coupled receptor 1 family. As to quaternary structure, homodimer; disulfide-linked, also forms higher order oligomers. Interacts with GNAS. Interacts with ATRNL1. Interacts with MGRN1; this interaction competes with GNAS-binding and thus inhibits agonist-induced cAMP production. Interacts with MRAP and MRAP2; these associated factors increase ligand-sensitivity and generation of cAMP. Brain, enriched in the striatum, nucleus accumbens, and periaqueductal gray.

It localises to the cell membrane. Functionally, hormone receptor that acts as a key component of the leptin-melanocortin pathway at the intersection of homeostatic maintenance of energetic state. Plays a role in regulating food intake: activation by a stimulating hormone such as anorexigenic alpha-melanocyte stimulating hormone (alpha-MSH) inhibits appetite, whereas binding to a natural antagonist like Agouti-related protein/AGRP promotes appetite. G-protein-coupled receptor that activates conventional Galphas signaling leading to induction of anorexogenic signaling in the hypothalamus to result in negative energy balance. Regulates the firing activity of neurons from the hypothalamus by alpha-MSH and AGRP independently of Galphas signaling by ligand-induced coupling of closure of inwardly rectifying potassium channel KCNJ13. In intestinal epithelial cells, plays a role in the inhibition of hepatic glucose production via nesfatin-1/NUCB2 leading to increased cyclic adenosine monophosphate (cAMP) levels and glucagon-like peptide 1 (GLP-1) secretion in the intestinal epithelium. This Rattus norvegicus (Rat) protein is Melanocortin receptor 4 (Mc4r).